Consider the following 309-residue polypeptide: Taste receptor type 2 member 114 (309 aa).

Residues 1 to 7 (MLGAMEG) are Extracellular-facing. The helical transmembrane segment at 8 to 28 (VLLSVATSEALLGIVGNTFIA) threads the bilayer. Residues 29–43 (LVNCMDCTRNKNLYN) are Cytoplasmic-facing. A helical membrane pass occupies residues 44 to 64 (IGFILTGLAISRICLVWILIT). The Extracellular portion of the chain corresponds to 65–87 (EAYIKIFSPQLLSPINIIELISY). A helical membrane pass occupies residues 88–108 (LWIITSQLNVWFATSLSIFYF). Residues 109–127 (LKIANFSHHIFLWLKRRIN) are Cytoplasmic-facing. Residues 128-148 (IVFAFLIGCLLMSWLFSFPVV) traverse the membrane as a helical segment. Residues 149–182 (VKMVKDKKMLYINSSWQIHMKKSELIINYVFTNG) lie on the Extracellular side of the membrane. N161 is a glycosylation site (N-linked (GlcNAc...) asparagine). The chain crosses the membrane as a helical span at residues 183-203 (GVFLLFIIMLIVCFLLIISLW). At 204 to 233 (RHSKWMQSNESGFRDLNTEVHVKTIKVLLS) the chain is on the cytoplasmic side. The helical transmembrane segment at 234–254 (FIILFILHLIGITINVICLLV) threads the bilayer. Topologically, residues 255-259 (PENNL) are extracellular. Residues 260-280 (LFVFGLTIAFLYPCCHSLILI) traverse the membrane as a helical segment. Residues 281-309 (LANSRLKRCFVRILQQLMCSEEGKEFRNT) are Cytoplasmic-facing.

It belongs to the G-protein coupled receptor T2R family.

The protein resides in the membrane. In terms of biological role, putative taste receptor which may play a role in the perception of bitterness. This chain is Taste receptor type 2 member 114, found in Rattus norvegicus (Rat).